Reading from the N-terminus, the 202-residue chain is GMP synthase [glutamine-hydrolyzing] subunit A (202 aa).

Residues 4–194 enclose the Glutamine amidotransferase type-1 domain; the sequence is KIYVVDNGGQ…IAICQQHKEK (191 aa). The active-site Nucleophile is the Cys81. Residues His168 and Glu170 contribute to the active site.

As to quaternary structure, heterodimer composed of a glutamine amidotransferase subunit (A) and a GMP-binding subunit (B).

The catalysed reaction is XMP + L-glutamine + ATP + H2O = GMP + L-glutamate + AMP + diphosphate + 2 H(+). The protein operates within purine metabolism; GMP biosynthesis; GMP from XMP (L-Gln route): step 1/1. Catalyzes the synthesis of GMP from XMP. In Thermoplasma volcanium (strain ATCC 51530 / DSM 4299 / JCM 9571 / NBRC 15438 / GSS1), this protein is GMP synthase [glutamine-hydrolyzing] subunit A.